Here is a 132-residue protein sequence, read N- to C-terminus: Ribonuclease P protein component (132 aa).

It belongs to the RnpA family. In terms of assembly, consists of a catalytic RNA component (M1 or rnpB) and a protein subunit.

The catalysed reaction is Endonucleolytic cleavage of RNA, removing 5'-extranucleotides from tRNA precursor.. Functionally, RNaseP catalyzes the removal of the 5'-leader sequence from pre-tRNA to produce the mature 5'-terminus. It can also cleave other RNA substrates such as 4.5S RNA. The protein component plays an auxiliary but essential role in vivo by binding to the 5'-leader sequence and broadening the substrate specificity of the ribozyme. In Marinomonas sp. (strain MWYL1), this protein is Ribonuclease P protein component.